The sequence spans 235 residues: Nucleoside diphosphate kinase 4, chloroplastic (235 aa).

Positions 93, 141, 169, 175, 186, and 196 each coordinate ATP. His-199 acts as the Pros-phosphohistidine intermediate in catalysis.

The protein belongs to the NDK family. In terms of assembly, homohexamer. Requires Mg(2+) as cofactor.

The protein resides in the plastid. Its subcellular location is the chloroplast thylakoid lumen. The enzyme catalyses a 2'-deoxyribonucleoside 5'-diphosphate + ATP = a 2'-deoxyribonucleoside 5'-triphosphate + ADP. It catalyses the reaction a ribonucleoside 5'-diphosphate + ATP = a ribonucleoside 5'-triphosphate + ADP. Functionally, major role in the synthesis of nucleoside triphosphates other than ATP. The ATP gamma phosphate is transferred to the NDP beta phosphate via a ping-pong mechanism, using a phosphorylated active-site intermediate. Shows the highest specificity towards GDP. The polypeptide is Nucleoside diphosphate kinase 4, chloroplastic (NDK4) (Spinacia oleracea (Spinach)).